The following is a 283-amino-acid chain: Phosphatidylserine decarboxylase proenzyme (283 aa).

Catalysis depends on charge relay system; for autoendoproteolytic cleavage activity residues Asp-96, His-152, and Ser-250. Residue Ser-250 is the Schiff-base intermediate with substrate; via pyruvic acid; for decarboxylase activity of the active site. Residue Ser-250 is modified to Pyruvic acid (Ser); by autocatalysis.

Belongs to the phosphatidylserine decarboxylase family. PSD-B subfamily. Prokaryotic type I sub-subfamily. In terms of assembly, heterodimer of a large membrane-associated beta subunit and a small pyruvoyl-containing alpha subunit. It depends on pyruvate as a cofactor. In terms of processing, is synthesized initially as an inactive proenzyme. Formation of the active enzyme involves a self-maturation process in which the active site pyruvoyl group is generated from an internal serine residue via an autocatalytic post-translational modification. Two non-identical subunits are generated from the proenzyme in this reaction, and the pyruvate is formed at the N-terminus of the alpha chain, which is derived from the carboxyl end of the proenzyme. The autoendoproteolytic cleavage occurs by a canonical serine protease mechanism, in which the side chain hydroxyl group of the serine supplies its oxygen atom to form the C-terminus of the beta chain, while the remainder of the serine residue undergoes an oxidative deamination to produce ammonia and the pyruvoyl prosthetic group on the alpha chain. During this reaction, the Ser that is part of the protease active site of the proenzyme becomes the pyruvoyl prosthetic group, which constitutes an essential element of the active site of the mature decarboxylase.

The protein localises to the cell membrane. The catalysed reaction is a 1,2-diacyl-sn-glycero-3-phospho-L-serine + H(+) = a 1,2-diacyl-sn-glycero-3-phosphoethanolamine + CO2. The protein operates within phospholipid metabolism; phosphatidylethanolamine biosynthesis; phosphatidylethanolamine from CDP-diacylglycerol: step 2/2. Functionally, catalyzes the formation of phosphatidylethanolamine (PtdEtn) from phosphatidylserine (PtdSer). This Acinetobacter baumannii (strain ACICU) protein is Phosphatidylserine decarboxylase proenzyme.